The sequence spans 58 residues: Small ribosomal subunit protein uS14 (58 aa).

The interval 1-21 (MSESETEQTGEHASHRTGQTH) is disordered. Residues 9-21 (TGEHASHRTGQTH) show a composition bias toward basic and acidic residues. The Zn(2+) site is built by Cys-23, Cys-26, Cys-41, and Cys-44.

The protein belongs to the universal ribosomal protein uS14 family. Zinc-binding uS14 subfamily. As to quaternary structure, part of the 30S ribosomal subunit. The cofactor is Zn(2+).

Its function is as follows. Binds 16S rRNA, required for the assembly of 30S particles. This chain is Small ribosomal subunit protein uS14, found in Haloquadratum walsbyi (strain DSM 16790 / HBSQ001).